The primary structure comprises 695 residues: U1 snRNP-associated protein usp107 (695 aa).

Residues 85-96 show a composition bias toward basic and acidic residues; the sequence is RDNESQQKDRKN. The disordered stretch occupies residues 85-134; sequence RDNESQQKDRKNLPRNQKSNEIQEKQTFQTPSSEKSTTERESRPFVPPNS. The segment covering 98 to 113 has biased composition (polar residues); the sequence is PRNQKSNEIQEKQTFQ. The 83-residue stretch at 139 to 221 folds into the RRM domain; sequence RMLFIGNIPK…PSTRLSLITD (83 aa). Residues 265–369 are a coiled coil; it reads DVRSRIERAA…NLLSKHRISR (105 aa). Basic and acidic residues-rich tracts occupy residues 487 to 506 and 548 to 561; these read EEDADALDRKEEERELRTRG and SERREFGLPERLLL. 2 disordered regions span residues 487–509 and 540–590; these read EEDADALDRKEEERELRTRGEGA and QTKK…AEKT. The 91-residue stretch at 605-695 folds into the PWI domain; the sequence is ESLWALPIDW…HVLLILRSEA (91 aa).

As to quaternary structure, component of the U1 snRNP particle, a subcomplex of the spliceosome. Interacts with prp5 and usp102.

It localises to the cytoplasm. It is found in the nucleus. Component of the U1 snRNP particle, which recognizes and binds the 5'-splice site of pre-mRNA. Together with other non-snRNP factors, U1 snRNP forms the spliceosomal commitment complex, that targets pre-mRNA to the splicing pathway. The polypeptide is U1 snRNP-associated protein usp107 (usp107) (Schizosaccharomyces pombe (strain 972 / ATCC 24843) (Fission yeast)).